Consider the following 395-residue polypeptide: MAKEKFDRSKEHANIGTIGHVDHGKTTLTAAIATVLAKNGDTVAQSYDMIDNAPEEKERGITINTSHIEYQTDKRHYAHVDCPGHADYVKNMITGAAQMDGGILVVSAADGPMPQTREHILLSRNVGVPALVVFLNKADMVDDEELLELVEMEVRDLLSEYDFPGDDVPVIVGSALKALEGDAEYEQKILDLMQAVDDYIPTPERDSDKPFMMPVEDVFSITGRGTVATGRVERGQIKVGEEVEIIGITEESMKTTVTGVEMFRKLLDYAEAGDNIGALLRGVAREDVQRGQVLAAPGSITPHTKFKADVYVLSKDEGGRHTPFFTNYRPQFYFRTTDVTGVVNLPEGTEMVMPGDNVEMTVELIAPIAIEDGTRFSIREGGRTVGSGVVTEIQQ.

A tr-type G domain is found at 10 to 204 (KEHANIGTIG…AVDDYIPTPE (195 aa)). Residues 19-26 (GHVDHGKT) form a G1 region. GTP is bound at residue 19–26 (GHVDHGKT). Threonine 26 is a binding site for Mg(2+). The interval 60-64 (GITIN) is G2. The tract at residues 81 to 84 (DCPG) is G3. GTP contacts are provided by residues 81-85 (DCPGH) and 136-139 (NKAD). Positions 136–139 (NKAD) are G4. Residues 174–176 (SAL) are G5.

The protein belongs to the TRAFAC class translation factor GTPase superfamily. Classic translation factor GTPase family. EF-Tu/EF-1A subfamily. As to quaternary structure, monomer.

The protein resides in the cytoplasm. The catalysed reaction is GTP + H2O = GDP + phosphate + H(+). Its function is as follows. GTP hydrolase that promotes the GTP-dependent binding of aminoacyl-tRNA to the A-site of ribosomes during protein biosynthesis. The protein is Elongation factor Tu of Staphylococcus carnosus (strain TM300).